We begin with the raw amino-acid sequence, 129 residues long: ATP synthase epsilon chain (129 aa).

This sequence belongs to the ATPase epsilon chain family. In terms of assembly, F-type ATPases have 2 components, CF(1) - the catalytic core - and CF(0) - the membrane proton channel. CF(1) has five subunits: alpha(3), beta(3), gamma(1), delta(1), epsilon(1). CF(0) has three main subunits: a, b and c.

The protein resides in the cell inner membrane. In terms of biological role, produces ATP from ADP in the presence of a proton gradient across the membrane. This is ATP synthase epsilon chain from Campylobacter fetus subsp. fetus (strain 82-40).